Reading from the N-terminus, the 111-residue chain is uncharacterized protein (111 aa).

The protein belongs to the SUI1 family.

This is an uncharacterized protein from Synechocystis sp. (strain ATCC 27184 / PCC 6803 / Kazusa).